The chain runs to 307 residues: Ribosomal RNA small subunit methyltransferase H (307 aa).

Residues 32–34 (GGH), aspartate 52, phenylalanine 78, aspartate 99, and glutamine 106 each bind S-adenosyl-L-methionine.

Belongs to the methyltransferase superfamily. RsmH family.

Its subcellular location is the cytoplasm. The catalysed reaction is cytidine(1402) in 16S rRNA + S-adenosyl-L-methionine = N(4)-methylcytidine(1402) in 16S rRNA + S-adenosyl-L-homocysteine + H(+). Specifically methylates the N4 position of cytidine in position 1402 (C1402) of 16S rRNA. The polypeptide is Ribosomal RNA small subunit methyltransferase H (Acinetobacter baumannii (strain AB0057)).